A 453-amino-acid chain; its full sequence is Protein LIAT1 (453 aa).

The tract at residues methionine 1–serine 152 is disordered. The segment at lysine 82–lysine 103 is lysine-rich domain. The span at arginine 83–glycine 96 shows a compositional bias: basic residues. Residues serine 106–serine 117 show a composition bias toward low complexity. Over residues cysteine 125 to proline 145 the composition is skewed to basic and acidic residues. Residues proline 145–tyrosine 197 form an interaction with ATE1 region. 20 tandem repeats follow at residues alanine 201–glutamate 210, alanine 211–aspartate 220, alanine 221–glutamate 230, alanine 231–glutamate 240, alanine 241–glutamate 250, alanine 251–glutamate 260, alanine 261–glutamate 270, alanine 271–glutamate 280, alanine 281–glutamate 290, alanine 291–glutamate 300, alanine 301–glutamate 310, alanine 311–glutamate 320, alanine 321–lysine 330, alanine 331–lysine 340, alanine 341–glutamate 350, alanine 351–lysine 360, alanine 361–glutamate 370, alanine 371–glutamate 380, alanine 381–glutamate 390, and alanine 391–asparagine 400. The tract at residues alanine 201 to asparagine 400 is 20 X 10 AA approximate tandem repeat of A-L-K-G-F-H-P-D-P-E. Disordered regions lie at residues phenylalanine 225–histidine 306 and glutamate 320–leucine 432. Over residues glutamate 320–histidine 396 the composition is skewed to basic and acidic residues.

Self-associates (via Lys-rich domain); targets LIAT1 to the nucleolus. Interacts with ATE1; it is not a substrate of ATE1, the interaction takes place in the cytoplasm and seems to increase ATE1 arginyltransferase activity. Interacts with JMJD6 and MRPS14. Post-translationally modified by JMJD6 lysyl-hydroxylase activity at its Lys-rich domain, which inhibits its self-association and nucleolar localization.

The protein resides in the nucleus. It is found in the nucleolus. Its subcellular location is the cytoplasm. Its function is as follows. Participates in nucleolar liquid-liquid phase separation (LLPS) through its N-terminal intrinsically disordered region (IDR). May be involved in ATE1-mediated N-terminal arginylation. In Homo sapiens (Human), this protein is Protein LIAT1.